The sequence spans 247 residues: tRNA pseudouridine synthase A (247 aa).

Asp-52 serves as the catalytic Nucleophile. Tyr-113 is a binding site for substrate.

The protein belongs to the tRNA pseudouridine synthase TruA family. As to quaternary structure, homodimer.

It carries out the reaction uridine(38/39/40) in tRNA = pseudouridine(38/39/40) in tRNA. Functionally, formation of pseudouridine at positions 38, 39 and 40 in the anticodon stem and loop of transfer RNAs. The protein is tRNA pseudouridine synthase A of Bartonella bacilliformis (strain ATCC 35685 / KC583 / Herrer 020/F12,63).